The sequence spans 153 residues: MSEQNNTEMSFQIQRIYTKDISFEAPNAPAVFQKEWQPEVKLDLDTASNQLADGVFEVVLRVTVTATMGEETAFLCEVQQAGIFTIAGIDGTQMAHCLGAYCPNILFPYARECITNLVARGTFPQLNLAPVNFDALFMSYLQQQAGEEPTQEA.

This sequence belongs to the SecB family. Homotetramer, a dimer of dimers. One homotetramer interacts with 1 SecA dimer.

It is found in the cytoplasm. Its function is as follows. One of the proteins required for the normal export of preproteins out of the cell cytoplasm. It is a molecular chaperone that binds to a subset of precursor proteins, maintaining them in a translocation-competent state. It also specifically binds to its receptor SecA. This is Protein-export protein SecB from Edwardsiella ictaluri (strain 93-146).